We begin with the raw amino-acid sequence, 368 residues long: Agmatine deiminase (368 aa).

Catalysis depends on cysteine 357, which acts as the Amidino-cysteine intermediate.

The protein belongs to the agmatine deiminase family. As to quaternary structure, homodimer.

It carries out the reaction agmatine + H2O = N-carbamoylputrescine + NH4(+). It functions in the pathway amine and polyamine biosynthesis; putrescine biosynthesis via agmatine pathway; N-carbamoylputrescine from agmatine: step 1/1. Mediates the hydrolysis of agmatine into N-carbamoylputrescine in the arginine decarboxylase (ADC) pathway of putrescine biosynthesis, a basic polyamine. The sequence is that of Agmatine deiminase from Stutzerimonas stutzeri (strain A1501) (Pseudomonas stutzeri).